The primary structure comprises 135 residues: Putative pre-16S rRNA nuclease (135 aa).

This sequence belongs to the YqgF nuclease family.

It is found in the cytoplasm. Functionally, could be a nuclease involved in processing of the 5'-end of pre-16S rRNA. This is Putative pre-16S rRNA nuclease from Christiangramia forsetii (strain DSM 17595 / CGMCC 1.15422 / KT0803) (Gramella forsetii).